We begin with the raw amino-acid sequence, 542 residues long: Chaperonin GroEL (542 aa).

ATP is bound by residues 29–32 (TLGP), 86–90 (DGTTT), glycine 413, 477–479 (NAA), and aspartate 493.

It belongs to the chaperonin (HSP60) family. Forms a cylinder of 14 subunits composed of two heptameric rings stacked back-to-back. Interacts with the co-chaperonin GroES.

It localises to the cytoplasm. It carries out the reaction ATP + H2O + a folded polypeptide = ADP + phosphate + an unfolded polypeptide.. Together with its co-chaperonin GroES, plays an essential role in assisting protein folding. The GroEL-GroES system forms a nano-cage that allows encapsulation of the non-native substrate proteins and provides a physical environment optimized to promote and accelerate protein folding. The chain is Chaperonin GroEL from Beutenbergia cavernae (strain ATCC BAA-8 / DSM 12333 / CCUG 43141 / JCM 11478 / NBRC 16432 / NCIMB 13614 / HKI 0122).